The primary structure comprises 330 residues: Ribosomal RNA small subunit methyltransferase C (330 aa).

Belongs to the methyltransferase superfamily. RsmC family. Monomer.

Its subcellular location is the cytoplasm. It catalyses the reaction guanosine(1207) in 16S rRNA + S-adenosyl-L-methionine = N(2)-methylguanosine(1207) in 16S rRNA + S-adenosyl-L-homocysteine + H(+). Its function is as follows. Specifically methylates the guanine in position 1207 of 16S rRNA in the 30S particle. The sequence is that of Ribosomal RNA small subunit methyltransferase C from Haemophilus influenzae (strain 86-028NP).